Consider the following 343-residue polypeptide: 4-hydroxy-2-oxovalerate aldolase 4 (343 aa).

The region spanning valine 8 to threonine 260 is the Pyruvate carboxyltransferase domain. Residue arginine 16–aspartate 17 coordinates substrate. Aspartate 17 serves as a coordination point for Mn(2+). Histidine 20 acts as the Proton acceptor in catalysis. Substrate contacts are provided by serine 170 and histidine 199. Residues histidine 199 and histidine 201 each coordinate Mn(2+). Tyrosine 290 is a substrate binding site.

The protein belongs to the 4-hydroxy-2-oxovalerate aldolase family.

It carries out the reaction (S)-4-hydroxy-2-oxopentanoate = acetaldehyde + pyruvate. The sequence is that of 4-hydroxy-2-oxovalerate aldolase 4 from Dechloromonas aromatica (strain RCB).